The sequence spans 129 residues: Histone H2A (129 aa).

Belongs to the histone H2A family. The nucleosome is a histone octamer containing two molecules each of H2A, H2B, H3 and H4 assembled in one H3-H4 heterotetramer and two H2A-H2B heterodimers. The octamer wraps approximately 147 bp of DNA.

The protein localises to the nucleus. Its subcellular location is the chromosome. In terms of biological role, core component of nucleosome. Nucleosomes wrap and compact DNA into chromatin, limiting DNA accessibility to the cellular machineries which require DNA as a template. Histones thereby play a central role in transcription regulation, DNA repair, DNA replication and chromosomal stability. DNA accessibility is regulated via a complex set of post-translational modifications of histones, also called histone code, and nucleosome remodeling. In Chlamydomonas reinhardtii (Chlamydomonas smithii), this protein is Histone H2A (H2A-II).